The primary structure comprises 350 residues: tRNA uridine(34) hydroxylase (350 aa).

Residues 146 to 240 (DDPDALFIDM…YARKAREQGL (95 aa)) form the Rhodanese domain. Cys-200 functions as the Cysteine persulfide intermediate in the catalytic mechanism.

Belongs to the TrhO family.

It carries out the reaction uridine(34) in tRNA + AH2 + O2 = 5-hydroxyuridine(34) in tRNA + A + H2O. Its function is as follows. Catalyzes oxygen-dependent 5-hydroxyuridine (ho5U) modification at position 34 in tRNAs, the first step in 5-carboxymethoxyuridine (cmo5U) biosynthesis. May be part of an alternate pathway, which is able to bypass cmo5U biogenesis in a subset of tRNAs under aerobic conditions. The polypeptide is tRNA uridine(34) hydroxylase (Escherichia coli (strain K12)).